Here is a 23-residue protein sequence, read N- to C-terminus: Retinol-binding protein 3 (23 aa).

It is found in the secreted. The protein localises to the extracellular space. Its subcellular location is the extracellular matrix. The protein resides in the interphotoreceptor matrix. Its function is as follows. IRBP shuttles 11-cis and all trans retinoids between the retinol isomerase in the pigment epithelium and the visual pigments in the photoreceptor cells of the retina. This is Retinol-binding protein 3 (RBP3) from Oryctolagus cuniculus (Rabbit).